A 420-amino-acid polypeptide reads, in one-letter code: G2/mitotic-specific cyclin-A (420 aa).

The tract at residues 64–93 (VQGSRIQPTRAAKEKLKPPQNISDSQLVND) is disordered. Positions 83 to 93 (QNISDSQLVND) are enriched in polar residues.

Belongs to the cyclin family. Cyclin AB subfamily.

Its function is as follows. Essential for the control of the cell cycle at the G2/M (mitosis) transition. Interacts with the CDC2 and CDK2 protein kinases to form MPF. G2/M cyclins accumulate steadily during G2 and are abruptly destroyed at mitosis. This chain is G2/mitotic-specific cyclin-A, found in Hydra viridissima (Green hydra).